The following is a 417-amino-acid chain: Protein translocase subunit SecD (417 aa).

6 consecutive transmembrane segments (helical) span residues 9–29 (LLVSVLAIVIAFAVFIKPLVS), 236–256 (ASMKAFAIGLAGVFLFMLLYY), 258–278 (LSGLVADIVLLLYTLLLLAVM), 288–308 (PGMAGIILSIGMAVDANVLIF), 333–353 (FTTILDSNVTTLMAAAVLFYL), and 360–380 (GFAVTLALGVLISMFTAVTVT).

The protein belongs to the SecD/SecF family. SecD subfamily. In terms of assembly, forms a complex with SecF. Part of the essential Sec protein translocation apparatus which comprises SecA, SecYEG and auxiliary proteins SecDF. Other proteins may also be involved.

It is found in the cell membrane. Functionally, part of the Sec protein translocase complex. Interacts with the SecYEG preprotein conducting channel. SecDF uses the proton motive force (PMF) to complete protein translocation after the ATP-dependent function of SecA. In Acidaminococcus fermentans (strain ATCC 25085 / DSM 20731 / CCUG 9996 / CIP 106432 / VR4), this protein is Protein translocase subunit SecD.